The sequence spans 68 residues: Large ribosomal subunit protein bL32 (68 aa).

Residues 1-24 (MAVPQNRVTRSRRNMRRSHDALVA) are disordered.

The protein belongs to the bacterial ribosomal protein bL32 family.

This is Large ribosomal subunit protein bL32 from Paracoccus denitrificans (strain Pd 1222).